Reading from the N-terminus, the 155-residue chain is Endoribonuclease YbeY (155 aa).

3 residues coordinate Zn(2+): histidine 120, histidine 124, and histidine 130.

This sequence belongs to the endoribonuclease YbeY family. Requires Zn(2+) as cofactor.

It localises to the cytoplasm. Functionally, single strand-specific metallo-endoribonuclease involved in late-stage 70S ribosome quality control and in maturation of the 3' terminus of the 16S rRNA. In Staphylococcus aureus (strain bovine RF122 / ET3-1), this protein is Endoribonuclease YbeY.